The following is a 142-amino-acid chain: DNA-directed RNA polymerases I, II, and III subunit rpabc3 (142 aa).

Positions Asp-16–Gln-40 are non-specific ssDNA binding.

This sequence belongs to the eukaryotic RPB8 RNA polymerase subunit family. Component of the RNA polymerase I (Pol I), RNA polymerase II (Pol II) and RNA polymerase III (Pol III) complexes consisting of at least 13, 12 and 17 subunits, respectively. Directly interacts with POLR2A.

It is found in the nucleus. The protein localises to the nucleolus. Functionally, DNA-dependent RNA polymerase catalyzes the transcription of DNA into RNA using the four ribonucleoside triphosphates as substrates. Common component of RNA polymerases I, II and III which synthesize ribosomal RNA precursors, mRNA precursors and many functional non-coding RNAs, and small RNAs, such as 5S rRNA and tRNAs, respectively. This Dictyostelium discoideum (Social amoeba) protein is DNA-directed RNA polymerases I, II, and III subunit rpabc3 (polr2h).